The sequence spans 402 residues: LIM/homeobox protein Lhx5 (402 aa).

2 LIM zinc-binding domains span residues Val3–Gly61 and Thr62–Leu125. Over residues Ser124–Pro148 the composition is skewed to low complexity. 2 disordered regions span residues Ser124–Thr186 and His298–Trp402. Positions Asp151–Ala167 are enriched in basic and acidic residues. Residues Arg180–Lys239 constitute a DNA-binding region (homeobox). Low complexity-rich tracts occupy residues Pro300 to Ser311 and Pro322 to Ala336.

It localises to the nucleus. In terms of biological role, plays an essential role in the regulation of neuronal differentiation and migration during development of the central nervous system. In Mus musculus (Mouse), this protein is LIM/homeobox protein Lhx5 (Lhx5).